The following is a 318-amino-acid chain: Epithelial-stromal interaction protein 1 (318 aa).

The segment at 1–60 (MNTRNRVVNSGLGASPASRPTRDPQDPSGRQGELSPVEDQREGLEAAPKGPSRESVVHAG) is disordered. Coiled coils occupy residues 73 to 188 (NINR…HQQY) and 240 to 280 (LKAE…HQTE).

As to expression, highly expressed in placenta, small intestine, spleen, kidney, thymus, liver, salivary gland and testes. Weakly expressed in breast, skeletal muscle and colon. Highly expressed in breast cancer upon interaction between tumor cells and stromal cells in vitro. Expressed in blood mononuclear cells from patients with systemic lupus erythematosus (SLE).

Functionally, plays a role in M1 macrophage polarization and is required for the proper regulation of gene expression during M1 versus M2 macrophage differentiation. Might play a role in RELA/p65 and STAT1 phosphorylation and nuclear localization upon activation of macrophages. The polypeptide is Epithelial-stromal interaction protein 1 (EPSTI1) (Homo sapiens (Human)).